The following is a 172-amino-acid chain: Large ribosomal subunit protein uL10 (172 aa).

This sequence belongs to the universal ribosomal protein uL10 family. In terms of assembly, part of the ribosomal stalk of the 50S ribosomal subunit. The N-terminus interacts with L11 and the large rRNA to form the base of the stalk. The C-terminus forms an elongated spine to which L12 dimers bind in a sequential fashion forming a multimeric L10(L12)X complex.

Its function is as follows. Forms part of the ribosomal stalk, playing a central role in the interaction of the ribosome with GTP-bound translation factors. This chain is Large ribosomal subunit protein uL10, found in Rhizobium leguminosarum bv. trifolii (strain WSM2304).